A 206-amino-acid chain; its full sequence is Small ribosomal subunit protein uS4 (206 aa).

Residues 96–156 (GRLDNVVYRM…EKSKKQARIK (61 aa)) form the S4 RNA-binding domain.

The protein belongs to the universal ribosomal protein uS4 family. As to quaternary structure, part of the 30S ribosomal subunit. Contacts protein S5. The interaction surface between S4 and S5 is involved in control of translational fidelity.

One of the primary rRNA binding proteins, it binds directly to 16S rRNA where it nucleates assembly of the body of the 30S subunit. In terms of biological role, with S5 and S12 plays an important role in translational accuracy. This chain is Small ribosomal subunit protein uS4, found in Haemophilus influenzae (strain ATCC 51907 / DSM 11121 / KW20 / Rd).